The chain runs to 806 residues: MSDDYDPTAVAFKPGDMETDMNTGEPLALEAEAAAKDPAHNEESGEDTNANVESGTLVHQGDEPESIDKEDKVEDGPDTKSDGGVLDEPKDGEQRDDEKKEEHKPENPSEEVAEDDDYVPAAVSEPVEEDSAGGGSVGGTGIPDGAISSLAASTTIPPPSDPNQVGGGASSTSNNNNSGPDNNKRKRLATDTIGILEDRIAANPRDMPAWLDLISTIVRKEKLDESRDIYERFLALYPLSAEIWIEYITLEMDNGEFKRLEQLFGRCLTRLPNLKLWNIYLTYVRRVNVLSSESDKITEARTNIIKAFEFYLDHVGIDRESGNVWFEYLDFIKSKPATTTWEEQQKNDLTRKIYRKAIGIPLNNLSILWTAYTNFEYSLNKATARKFINEKSGSCQNARQCQTVLENLMRGLDRSSVPKSGPRDEFQVRAWKKWIDWEKSNPLGTDNKAETNKRLLYCLKQAVMSLQFVPEIWFLAAEYCFDDPLLKTEALQFLKDGLSLNPNSSLLAFRLAEYYEREADAEKMRTIYDEHIESLGKERQALIEAQGDPEAEPTAEIIKLNTQISIAYSVCMKAVKRFEGIKPGRMVFKKARNTGFATYHIYVASALMEFHHNKNPTVATNVFELGLKYCGSNAAYVQHYLDFLISLHDDTNARALFEKTIPLLGPSDAASLIKSMIKFESDFGEITSVVKLQDRLRQLNPDTSPITIIADRFATSDFDVIRQCDMLQKPKSRTDEDSDSERPSKRARRTSHGNDQGDKMEPFNLPQKIDALLRQLPNSSDYGEATFDPQRLVDLFRDVRIPDGLL.

Residues 1–187 (MSDDYDPTAV…SGPDNNKRKR (187 aa)) are disordered. 2 stretches are compositionally biased toward basic and acidic residues: residues 33 to 43 (AAAKDPAHNEE) and 60 to 107 (QGDE…KPEN). Acidic residues predominate over residues 108–118 (PSEEVAEDDDY). The span at 132-142 (AGGGSVGGTGI) shows a compositional bias: gly residues. The segment covering 170–181 (SSTSNNNNSGPD) has biased composition (low complexity). HAT repeat units follow at residues 221–253 (EKLD…LEMD), 255–286 (GEFK…YVRR), 299–334 (EART…FIKS), 345–378 (QKND…FEYS), and 404–440 (VLEN…WEKS). A disordered region spans residues 729–770 (KPKSRTDEDSDSERPSKRARRTSHGNDQGDKMEPFNLPQKID). Residues 732–744 (SRTDEDSDSERPS) are compositionally biased toward basic and acidic residues.

Its subcellular location is the nucleus. The protein resides in the cytoplasm. Functionally, component of the cleavage factor IA (CFIA) complex, which is involved in the endonucleolytic cleavage during polyadenylation-dependent pre-mRNA 3'-end formation. The polypeptide is mRNA 3'-end-processing protein RNA14 (RNA14) (Yarrowia lipolytica (strain CLIB 122 / E 150) (Yeast)).